Consider the following 435-residue polypeptide: Maltodextrin transport system permease protein MdxF (435 aa).

Helical transmembrane passes span 35 to 55 (LLFLAITGLFAFELCVFGIQA), 73 to 93 (FMLIEGTLQLIVTMIFLMFYI), 136 to 156 (AYIMMVFVIIFPVLVTLFVAL), 199 to 219 (VIWTICATTLQIILGIVTALF), 234 to 254 (IFLFPWAVPAFITIMSFSNMF), 293 to 313 (LIMIQTWLGFPYIYVMVTGVL), 337 to 357 (HITFPMILFATAPVMITQYTF), and 403 to 423 (VAAAVTLLISFIVIGISLIAF). Residues 195–422 (LGWTVIWTIC…FIVIGISLIA (228 aa)) form the ABC transmembrane type-1 domain.

This sequence belongs to the binding-protein-dependent transport system permease family. MalFG subfamily. The complex is composed of two ATP-binding proteins (MsmX), two transmembrane proteins (MdxF and MdxG) and a solute-binding protein (MdxE).

It is found in the cell membrane. In terms of biological role, part of the ABC transporter complex involved in maltodextrin import. Probably responsible for the translocation of the substrate across the membrane. The protein is Maltodextrin transport system permease protein MdxF (mdxF) of Bacillus subtilis (strain 168).